A 192-amino-acid chain; its full sequence is UPF0149 protein VP2588 (192 aa).

It belongs to the UPF0149 family.

In Vibrio parahaemolyticus serotype O3:K6 (strain RIMD 2210633), this protein is UPF0149 protein VP2588.